A 289-amino-acid chain; its full sequence is Serine/threonine-protein phosphatase Pgam5, mitochondrial (289 aa).

A helical membrane pass occupies residues 7-23; it reads FVCGTGAGLAAYYLQRL.

The protein belongs to the phosphoglycerate mutase family. BPG-dependent PGAM subfamily. Interacts with Pk92B/ASK1.

Its subcellular location is the mitochondrion outer membrane. The catalysed reaction is O-phospho-L-seryl-[protein] + H2O = L-seryl-[protein] + phosphate. The enzyme catalyses O-phospho-L-threonyl-[protein] + H2O = L-threonyl-[protein] + phosphate. Displays phosphatase activity for serine/threonine residues, and dephosphorylates and activates Pk92B kinase. Has apparently no phosphoglycerate mutase activity. This Drosophila melanogaster (Fruit fly) protein is Serine/threonine-protein phosphatase Pgam5, mitochondrial (Pgam5).